We begin with the raw amino-acid sequence, 379 residues long: Tryptophan 2,3-dioxygenase (379 aa).

Substrate contacts are provided by residues 57-61 (FIITH) and R128. Position 312 (H312) interacts with heme. Residue T327 participates in substrate binding.

It belongs to the tryptophan 2,3-dioxygenase family. As to quaternary structure, homotetramer. Dimer of dimers. Requires heme as cofactor.

The enzyme catalyses L-tryptophan + O2 = N-formyl-L-kynurenine. It functions in the pathway amino-acid degradation; L-tryptophan degradation via kynurenine pathway; L-kynurenine from L-tryptophan: step 1/2. It participates in pigment biosynthesis; ommochrome biosynthesis. Its function is as follows. Heme-dependent dioxygenase that catalyzes the oxidative cleavage of the L-tryptophan (L-Trp) pyrrole ring and converts L-tryptophan to N-formyl-L-kynurenine. Catalyzes the oxidative cleavage of the indole moiety. Required during larval growth to control the level of potentially harmful free tryptophan in the hemolymph. In the adult the same reaction is the first step in the ommochrome biosynthetic pathway. This is Tryptophan 2,3-dioxygenase from Drosophila melanogaster (Fruit fly).